The primary structure comprises 269 residues: Shikimate dehydrogenase (NADP(+)) (269 aa).

Residues 14–16 (SKS) and Thr61 contribute to the shikimate site. The Proton acceptor role is filled by Lys65. Glu77 contributes to the NADP(+) binding site. Shikimate-binding residues include Asn86 and Asp102. NADP(+) is bound by residues 126 to 130 (GAGGA), 150 to 155 (NRTYEK), and Met213. Tyr215 contributes to the shikimate binding site. Gly237 is a binding site for NADP(+).

The protein belongs to the shikimate dehydrogenase family. Homodimer.

The catalysed reaction is shikimate + NADP(+) = 3-dehydroshikimate + NADPH + H(+). Its pathway is metabolic intermediate biosynthesis; chorismate biosynthesis; chorismate from D-erythrose 4-phosphate and phosphoenolpyruvate: step 4/7. Involved in the biosynthesis of the chorismate, which leads to the biosynthesis of aromatic amino acids. Catalyzes the reversible NADPH linked reduction of 3-dehydroshikimate (DHSA) to yield shikimate (SA). The chain is Shikimate dehydrogenase (NADP(+)) from Aliivibrio fischeri (strain ATCC 700601 / ES114) (Vibrio fischeri).